A 347-amino-acid polypeptide reads, in one-letter code: Purine-rich element-binding protein gamma (347 aa).

Disordered regions lie at residues 1–34 (MERA…YPQA) and 133–169 (GHRQ…HPHS). Residues 9–24 (GGGGRGRGGKNVGGSG) show a composition bias toward gly residues. Residues 51 to 293 (AGGAAEIQEL…GIFLKVSEVR (243 aa)) mediate DNA binding. The span at 134–146 (HRQEHGHSKEQGS) shows a compositional bias: basic and acidic residues. 3 positions are modified to phosphoserine: Ser160, Ser163, and Ser339.

Belongs to the PUR DNA-binding protein family. As to expression, isoform 1 is expressed in testis and glioblastoma. Isoform 2 is expressed in fetal lung.

It is found in the nucleus. This is Purine-rich element-binding protein gamma (PURG) from Homo sapiens (Human).